The sequence spans 464 residues: Siroheme synthase (464 aa).

The interval 1–203 (MEFLPLFHNL…GQGDEAERLL (203 aa)) is precorrin-2 dehydrogenase /sirohydrochlorin ferrochelatase. Residues 22–23 (EI) and 43–44 (PQ) each bind NAD(+). Ser-128 is modified (phosphoserine). Residues 216-464 (GEVYLVGAGP…KWFEGAQSQV (249 aa)) are uroporphyrinogen-III C-methyltransferase. Pro-225 provides a ligand contact to S-adenosyl-L-methionine. The active-site Proton acceptor is Asp-248. Lys-270 (proton donor) is an active-site residue. S-adenosyl-L-methionine is bound by residues 301 to 303 (GGD), Ile-306, 331 to 332 (TA), Met-383, and Gly-412.

It in the N-terminal section; belongs to the precorrin-2 dehydrogenase / sirohydrochlorin ferrochelatase family. This sequence in the C-terminal section; belongs to the precorrin methyltransferase family.

It carries out the reaction uroporphyrinogen III + 2 S-adenosyl-L-methionine = precorrin-2 + 2 S-adenosyl-L-homocysteine + H(+). It catalyses the reaction precorrin-2 + NAD(+) = sirohydrochlorin + NADH + 2 H(+). The enzyme catalyses siroheme + 2 H(+) = sirohydrochlorin + Fe(2+). It participates in cofactor biosynthesis; adenosylcobalamin biosynthesis; precorrin-2 from uroporphyrinogen III: step 1/1. Its pathway is cofactor biosynthesis; adenosylcobalamin biosynthesis; sirohydrochlorin from precorrin-2: step 1/1. The protein operates within porphyrin-containing compound metabolism; siroheme biosynthesis; precorrin-2 from uroporphyrinogen III: step 1/1. It functions in the pathway porphyrin-containing compound metabolism; siroheme biosynthesis; siroheme from sirohydrochlorin: step 1/1. It participates in porphyrin-containing compound metabolism; siroheme biosynthesis; sirohydrochlorin from precorrin-2: step 1/1. Multifunctional enzyme that catalyzes the SAM-dependent methylations of uroporphyrinogen III at position C-2 and C-7 to form precorrin-2 via precorrin-1. Then it catalyzes the NAD-dependent ring dehydrogenation of precorrin-2 to yield sirohydrochlorin. Finally, it catalyzes the ferrochelation of sirohydrochlorin to yield siroheme. This is Siroheme synthase from Pseudomonas fluorescens (strain SBW25).